We begin with the raw amino-acid sequence, 84 residues long: Small ribosomal subunit protein uS17 (84 aa).

Belongs to the universal ribosomal protein uS17 family. Part of the 30S ribosomal subunit.

In terms of biological role, one of the primary rRNA binding proteins, it binds specifically to the 5'-end of 16S ribosomal RNA. The polypeptide is Small ribosomal subunit protein uS17 (Karelsulcia muelleri (strain GWSS) (Sulcia muelleri)).